Here is a 1193-residue protein sequence, read N- to C-terminus: MARHGDTRSPSPVGSTYSSSRRSRRDDDRYEKSRRDDGRSYRRSRSPERRYRDRDRDSYRRRDRSIDRRDDHRDEDSYRPSRRDRSRDRRRSRDRGDDRDHRRKSRERDYRSRRDDSRDRARRRTDDSADLKHKSRRDDSRTRNLDSKSRETSKPSTPAPAAPTEDEKRAERLAKLEAWKQKQAAERERKQREAAAAGGARSILEEIDRKSGLSPAVGSPQSPAATPTTDATPAPYAGKFDPKAIVRNAVPAPSTPAVLGNDVAVPQSAKASASLSSMNNHVQANKPPAAISTASSTLTVKRNVGGFGLGARQVADAEKSSAVKTLGFGEEESKRKKLERLPTPPLEDAKDDTGAVDAAVEDEDDVDMQDGGTEEENAAAARAAAERREERLQSEALRAQSKEAAPQPNGDVEMDDVSHQAESEKMEVDAAEEEVDPLDAFMSELAETAPPKKTTGARFAKAKEQQPEAMFGDEHDVDLTAVGEGDADDFLAIANKAKKKKDIPAVDHEKMEYEPFRKKFYTEPSNLAEMTDEEAASLRLELDGIKVRGVDVPKPVMKWSQCGLGVQTLDVIHRLGYENPTSIQSQAIPAIMSGRDVIGVAKTGSGKTIAFLIPMFRHIRDQRPLENMEGPIGLIMTPTRELATQIHKDCKPFLKALNLRAVCAYGGAPIKDQIAELKRGAEIVVCTPGRMIDLLAANAGRVTNLRRVTYVVLDEADRMFDMGFEPQVMKIMANIRPDRQTVLFSATFPRNMEALARKSLTKPIEIVVGGKSVVAPEITQIVEVRNEDTKFVRLLEILGNLYSDDANEDARALIFVDRQEAADTLLRELMRKGYPCMSIHGGKDQIDRDSTIEDFKAGIFPILIATSVAARGLDVKQLKLVVNYDAPNHLEDYVHRAGRTGRAGNTGTAVTFLTEEQERYSVDIAKALRQSGQKVPEPVQKMVDSFLEKVKAGKEKASASGFGGKGLERLDQERDAARMRERRTYKTGEEGEDEEDKEDKAEKADERFSKVVSSVQSAAAAATTPLPGVPKGIDLDGKITVHRTEKDPAGASKNPLDKVGSAVADIHARLSRAGVMRSGVPIDNRGPDAGAFHATLEINDFPQKARWAVTNRTNVAKILEATGTSITTKGSFYPAGKEPGPGENPKLYILVEGETELAVTNAMRELMRLLKEGTLAAADSDARAPVGGRYNVV.

Disordered stretches follow at residues 1-236 (MARH…PAPY) and 326-426 (LGFG…SEKM). The span at 8 to 20 (RSPSPVGSTYSSS) shows a compositional bias: low complexity. 3 stretches are compositionally biased toward basic and acidic residues: residues 24–87 (RRDD…DRSR), 94–153 (DRGD…RETS), and 165–193 (EDEK…KQRE). Residues 223-235 (PAATPTTDATPAP) are compositionally biased toward low complexity. Over residues 359–377 (AVEDEDDVDMQDGGTEEEN) the composition is skewed to acidic residues. Composition is skewed to basic and acidic residues over residues 384-393 (AAERREERLQ) and 416-426 (DVSHQAESEKM). Residues 557-585 (MKWSQCGLGVQTLDVIHRLGYENPTSIQS) carry the Q motif motif. The Helicase ATP-binding domain maps to 588 to 766 (IPAIMSGRDV…RKSLTKPIEI (179 aa)). ATP is bound at residue 601-608 (AKTGSGKT). The short motif at 714–717 (DEAD) is the DEAD box element. The region spanning 793–943 (RLLEILGNLY…KVPEPVQKMV (151 aa)) is the Helicase C-terminal domain. The segment at 957 to 1009 (ASASGFGGKGLERLDQERDAARMRERRTYKTGEEGEDEEDKEDKAEKADERFS) is disordered. Basic and acidic residues-rich tracts occupy residues 966–989 (GLER…KTGE) and 998–1009 (EDKAEKADERFS).

The protein belongs to the DEAD box helicase family. DDX46/PRP5 subfamily.

The protein localises to the nucleus. It catalyses the reaction ATP + H2O = ADP + phosphate + H(+). In terms of biological role, ATP-dependent RNA helicase involved spliceosome assembly and in nuclear splicing. Catalyzes an ATP-dependent conformational change of U2 snRNP. Bridges U1 and U2 snRNPs and enables stable U2 snRNP association with intron RNA. The chain is Pre-mRNA-processing ATP-dependent RNA helicase prp5 (prp5) from Neosartorya fischeri (strain ATCC 1020 / DSM 3700 / CBS 544.65 / FGSC A1164 / JCM 1740 / NRRL 181 / WB 181) (Aspergillus fischerianus).